We begin with the raw amino-acid sequence, 81 residues long: Photosystem I iron-sulfur center (81 aa).

4Fe-4S ferredoxin-type domains are found at residues 2 to 31 (SHSV…MIPW) and 39 to 68 (IAPA…VRVY). [4Fe-4S] cluster is bound by residues Cys-11, Cys-14, Cys-17, Cys-21, Cys-48, Cys-51, Cys-54, and Cys-58.

As to quaternary structure, the eukaryotic PSI reaction center is composed of at least 11 subunits. It depends on [4Fe-4S] cluster as a cofactor.

Its subcellular location is the plastid. It localises to the chloroplast thylakoid membrane. It catalyses the reaction reduced [plastocyanin] + hnu + oxidized [2Fe-2S]-[ferredoxin] = oxidized [plastocyanin] + reduced [2Fe-2S]-[ferredoxin]. In terms of biological role, apoprotein for the two 4Fe-4S centers FA and FB of photosystem I (PSI); essential for photochemical activity. FB is the terminal electron acceptor of PSI, donating electrons to ferredoxin. The C-terminus interacts with PsaA/B/D and helps assemble the protein into the PSI complex. Required for binding of PsaD and PsaE to PSI. PSI is a plastocyanin-ferredoxin oxidoreductase, converting photonic excitation into a charge separation, which transfers an electron from the donor P700 chlorophyll pair to the spectroscopically characterized acceptors A0, A1, FX, FA and FB in turn. In Liriodendron tulipifera (Tuliptree), this protein is Photosystem I iron-sulfur center.